The primary structure comprises 152 residues: Ribonuclease H (152 aa).

An RNase H type-1 domain is found at 1–142 (MGSKVVIYTD…ADKLAVQGRE (142 aa)). Positions 10, 48, 70, and 134 each coordinate Mg(2+).

It belongs to the RNase H family. Monomer. Mg(2+) serves as cofactor.

The protein localises to the cytoplasm. The enzyme catalyses Endonucleolytic cleavage to 5'-phosphomonoester.. Endonuclease that specifically degrades the RNA of RNA-DNA hybrids. This chain is Ribonuclease H, found in Rickettsia massiliae (strain Mtu5).